Here is a 296-residue protein sequence, read N- to C-terminus: HTH-type transcriptional activator AmpR (296 aa).

Positions 6 to 63 constitute an HTH lysR-type domain; that stretch reads LPLNALRAFEASARHLSFTRAAIELCVTQAAVSHQVKSLEERLGVALFKRLPRGLMLT. The segment at residues 23–42 is a DNA-binding region (H-T-H motif); the sequence is FTRAAIELCVTQAAVSHQVK. An includes the LysR substrate-binding / effector-binding domain, involved in binding to specific cell-wall-derived muropeptide products, some of which have signaling functions, leading to disparate responses such as antibiotic resistance, virulence, and host cell inflammation region spans residues 83–296; it reads LLERFEGGHY…EMAAVEARGR (214 aa). A LysR substrate-binding domain is found at 91-289; sequence HYRDVLTVGA…AFRGWLLEMA (199 aa).

It belongs to the LysR transcriptional regulatory family. As to quaternary structure, homodimer.

It is found in the cytoplasm. Its subcellular location is the membrane. Functionally, transcription regulator that plays a critical role in the expression of beta-lactamase AmpC, acting by positive regulation of the ampC gene. Has a wider role in the regulation of expression of genes involved in proteolysis, quorum sensing, and virulence. Acts by binding directly to the promoter region of the ampC gene. Probably does not regulate transcription of its own gene. The sequence is that of HTH-type transcriptional activator AmpR (ampR) from Pseudomonas aeruginosa (strain ATCC 15692 / DSM 22644 / CIP 104116 / JCM 14847 / LMG 12228 / 1C / PRS 101 / PAO1).